Consider the following 211-residue polypeptide: Major fimbrial subunit (211 aa).

The N-terminal stretch at 1–20 (MKKTLLGSLILLAFAGNVQA) is a signal peptide. Residues C43 and C83 are joined by a disulfide bond.

The protein belongs to the fimbrial protein family.

The protein localises to the fimbrium. In terms of biological role, mediates adherence to oropharyngeal epithelial cells. Helps the airway colonization process. The protein is Major fimbrial subunit (hifA) of Haemophilus influenzae.